Consider the following 130-residue polypeptide: uncharacterized protein (130 aa).

This is an uncharacterized protein from Sputnik virophage.